Here is a 231-residue protein sequence, read N- to C-terminus: Large ribosomal subunit protein uL1 (231 aa).

It belongs to the universal ribosomal protein uL1 family. Part of the 50S ribosomal subunit.

Binds directly to 23S rRNA. The L1 stalk is quite mobile in the ribosome, and is involved in E site tRNA release. Functionally, protein L1 is also a translational repressor protein, it controls the translation of the L11 operon by binding to its mRNA. The chain is Large ribosomal subunit protein uL1 from Pseudomonas fluorescens (strain Pf0-1).